A 180-amino-acid polypeptide reads, in one-letter code: ATP synthase subunit delta (180 aa).

This sequence belongs to the ATPase delta chain family. As to quaternary structure, F-type ATPases have 2 components, F(1) - the catalytic core - and F(0) - the membrane proton channel. F(1) has five subunits: alpha(3), beta(3), gamma(1), delta(1), epsilon(1). F(0) has three main subunits: a(1), b(2) and c(10-14). The alpha and beta chains form an alternating ring which encloses part of the gamma chain. F(1) is attached to F(0) by a central stalk formed by the gamma and epsilon chains, while a peripheral stalk is formed by the delta and b chains.

The protein resides in the cell membrane. F(1)F(0) ATP synthase produces ATP from ADP in the presence of a proton or sodium gradient. F-type ATPases consist of two structural domains, F(1) containing the extramembraneous catalytic core and F(0) containing the membrane proton channel, linked together by a central stalk and a peripheral stalk. During catalysis, ATP synthesis in the catalytic domain of F(1) is coupled via a rotary mechanism of the central stalk subunits to proton translocation. Its function is as follows. This protein is part of the stalk that links CF(0) to CF(1). It either transmits conformational changes from CF(0) to CF(1) or is implicated in proton conduction. This Bacillus cereus (strain G9842) protein is ATP synthase subunit delta.